The following is a 203-amino-acid chain: Translation machinery-associated protein 16 (203 aa).

A disordered region spans residues 1–39; it reads MPKAPKGKSAGREKKVIHPYSRKAAQITREAHKQEKKEK. Serine 9 carries the post-translational modification ADP-ribosylserine. Residues 29–39 are compositionally biased toward basic and acidic residues; the sequence is REAHKQEKKEK.

Belongs to the TMA16 family. In terms of assembly, associates with pre-60S ribosomal particles.

Its subcellular location is the nucleus. In terms of biological role, involved in the biogenesis of the 60S ribosomal subunit in the nucleus. This is Translation machinery-associated protein 16 (TMA16) from Homo sapiens (Human).